Consider the following 88-residue polypeptide: MKKRNFSAEFKRESAQLVVDQKYTVADAAKAMDVGLSTMTRWVKQLRDERQGKTPKASPITPEQIEIRKLRKKLQRIEMENEILKRLL.

Belongs to the transposase 8 family.

Functionally, involved in the transposition of the insertion sequence IS911. This is Putative transposase InsN for insertion sequence element IS911B (insN2) from Escherichia coli (strain K12).